The sequence spans 142 residues: Hemoglobin subunit alpha-1/2 (142 aa).

Positions 2 to 142 (VLSPADKTNI…VSTVLTSKYR (141 aa)) constitute a Globin domain. Serine 4 is modified (phosphoserine). Lysine 8 is subject to N6-succinyllysine. A Phosphothreonine modification is found at threonine 9. Lysine 12 is modified (N6-succinyllysine). Lysine 17 bears the N6-acetyllysine; alternate mark. An N6-succinyllysine; alternate modification is found at lysine 17. Tyrosine 25 is subject to Phosphotyrosine. At lysine 41 the chain carries N6-succinyllysine. Histidine 59 is a binding site for O2. Histidine 88 contributes to the heme b binding site. Serine 103 bears the Phosphoserine mark. Phosphothreonine is present on threonine 109. Serine 125 bears the Phosphoserine mark. Residues threonine 135 and threonine 138 each carry the phosphothreonine modification. Position 139 is a phosphoserine (serine 139).

This sequence belongs to the globin family. In terms of assembly, heterotetramer of two alpha chains and two beta chains. In terms of tissue distribution, red blood cells.

Functionally, involved in oxygen transport from the lung to the various peripheral tissues. The polypeptide is Hemoglobin subunit alpha-1/2 (Oryctolagus cuniculus (Rabbit)).